A 541-amino-acid chain; its full sequence is Formimidoyltransferase-cyclodeaminase (541 aa).

The tract at residues 1–181 (MSQLVECVPN…GATVTGARKF (181 aa)) is formiminotransferase N-subdomain. Histidine 82 serves as the catalytic For formimidoyltransferase activity. Folate is bound at residue 163-172 (GPSSFVPSWG). The interval 182–326 (LIAFNINLLS…PKERIIEYLV (145 aa)) is formiminotransferase C-subdomain. The segment at 327–334 (PDSGPEQS) is linker. Positions 335 to 541 (LLDASLRAFV…VLGSLEARKE (207 aa)) are cyclodeaminase/cyclohydrolase. Aspartate 412 (for cyclodeaminase activity) is an active-site residue. Residue serine 520 is modified to Phosphoserine.

In the C-terminal section; belongs to the cyclodeaminase/cyclohydrolase family. The protein in the N-terminal section; belongs to the formiminotransferase family. As to quaternary structure, homooctamer, including four polyglutamate binding sites. The subunits are arranged as a tetramer of dimers, and form a planar ring-shaped structure. In terms of tissue distribution, specifically expressed in liver (at protein level).

The protein resides in the cytoplasm. Its subcellular location is the cytosol. The protein localises to the golgi apparatus. It localises to the cytoskeleton. It is found in the microtubule organizing center. The protein resides in the centrosome. Its subcellular location is the centriole. It catalyses the reaction 5-formimidoyltetrahydrofolate + L-glutamate = N-formimidoyl-L-glutamate + (6S)-5,6,7,8-tetrahydrofolate. The enzyme catalyses 5-formimidoyltetrahydrofolate + 2 H(+) = (6R)-5,10-methenyltetrahydrofolate + NH4(+). Its pathway is amino-acid degradation; L-histidine degradation into L-glutamate; L-glutamate from N-formimidoyl-L-glutamate (transferase route): step 1/1. Folate-dependent enzyme, that displays both transferase and deaminase activity. Serves to channel one-carbon units from formiminoglutamate to the folate pool. Functionally, binds and promotes bundling of vimentin filaments originating from the Golgi. The chain is Formimidoyltransferase-cyclodeaminase (Ftcd) from Rattus norvegicus (Rat).